Consider the following 269-residue polypeptide: Putative pyruvate, phosphate dikinase regulatory protein (269 aa).

An ADP-binding site is contributed by 147–154 (GVSRSSKT).

This sequence belongs to the pyruvate, phosphate/water dikinase regulatory protein family. PDRP subfamily.

The catalysed reaction is N(tele)-phospho-L-histidyl/L-threonyl-[pyruvate, phosphate dikinase] + ADP = N(tele)-phospho-L-histidyl/O-phospho-L-threonyl-[pyruvate, phosphate dikinase] + AMP + H(+). It catalyses the reaction N(tele)-phospho-L-histidyl/O-phospho-L-threonyl-[pyruvate, phosphate dikinase] + phosphate + H(+) = N(tele)-phospho-L-histidyl/L-threonyl-[pyruvate, phosphate dikinase] + diphosphate. Functionally, bifunctional serine/threonine kinase and phosphorylase involved in the regulation of the pyruvate, phosphate dikinase (PPDK) by catalyzing its phosphorylation/dephosphorylation. The sequence is that of Putative pyruvate, phosphate dikinase regulatory protein from Trichlorobacter lovleyi (strain ATCC BAA-1151 / DSM 17278 / SZ) (Geobacter lovleyi).